The sequence spans 934 residues: Protein translocase subunit SecA (934 aa).

ATP is bound by residues Gln-90, 108 to 112 (GEGKT), and Asp-509. Positions 535 to 565 (PEEDHTPPVPLQRSAPGGFSDAAAPSLPRSG) are disordered.

Belongs to the SecA family. Monomer and homodimer. Part of the essential Sec protein translocation apparatus which comprises SecA, SecYEG and auxiliary proteins SecDF. Other proteins may also be involved.

The protein resides in the cell inner membrane. The protein localises to the cellular thylakoid membrane. It is found in the cytoplasm. It catalyses the reaction ATP + H2O + cellular proteinSide 1 = ADP + phosphate + cellular proteinSide 2.. In terms of biological role, part of the Sec protein translocase complex. Interacts with the SecYEG preprotein conducting channel. Has a central role in coupling the hydrolysis of ATP to the transfer of proteins into and across the cell membrane, serving as an ATP-driven molecular motor driving the stepwise translocation of polypeptide chains across the membrane. Functionally, probably participates in protein translocation into and across both the cytoplasmic and thylakoid membranes in cyanobacterial cells. This Synechococcus sp. (strain CC9605) protein is Protein translocase subunit SecA.